The chain runs to 452 residues: Mitochondrial import inner membrane translocase subunit TIM44 (452 aa).

At Thr-128 the chain carries Phosphothreonine. Position 166 to 173 (166 to 173) interacts with ATP; the sequence is GGEKLGRT. Position 180 is a phosphoserine (Ser-180). The residue at position 217 (Lys-217) is an N6-succinyllysine.

This sequence belongs to the Tim44 family. In terms of assembly, probable component of the PAM complex at least composed of a mitochondrial HSP70 protein, GRPEL1 or GRPEL2, TIMM44, TIMM16/PAM16 and TIMM14/DNAJC19. The complex interacts with the TIMM23 component of the TIM23 complex. Interacts with SLC25A4/ANT1 and SLC25A5/ANT2; leading to inhibit the presequence translocase TIMM23, thereby promoting stabilization of PINK1.

It localises to the mitochondrion inner membrane. Its subcellular location is the mitochondrion matrix. Functionally, essential component of the PAM complex, a complex required for the translocation of transit peptide-containing proteins from the inner membrane into the mitochondrial matrix in an ATP-dependent manner. Recruits mitochondrial HSP70 to drive protein translocation into the matrix using ATP as an energy source. This is Mitochondrial import inner membrane translocase subunit TIM44 (TIMM44) from Homo sapiens (Human).